Consider the following 416-residue polypeptide: Na(+)/H(+) antiporter NhaA (416 aa).

11 helical membrane-spanning segments follow: residues Gly39–Ala59, Leu82–Ile102, Leu119–Val139, Gly146–Gly166, Val175–Phe195, Gly198–Leu218, Ala234–Leu254, Pro281–Gly301, Leu315–Ala335, Trp353–Ile373, and Gly390–Gln410.

The protein belongs to the NhaA Na(+)/H(+) (TC 2.A.33) antiporter family.

Its subcellular location is the cell inner membrane. It carries out the reaction Na(+)(in) + 2 H(+)(out) = Na(+)(out) + 2 H(+)(in). In terms of biological role, na(+)/H(+) antiporter that extrudes sodium in exchange for external protons. The chain is Na(+)/H(+) antiporter NhaA from Acidovorax sp. (strain JS42).